Consider the following 422-residue polypeptide: Phosphoserine aminotransferase 2, chloroplastic (422 aa).

The transit peptide at 1 to 50 (MAASTNSFLIGNQTQIPSLKPKSISQSFIHFTKPNTINLTTRTKSVSIRC) directs the protein to the chloroplast. A51 bears the N-acetylalanine mark. R101 contacts L-glutamate. Pyridoxal 5'-phosphate contacts are provided by residues 135 to 136 (AT), W161, T211, D233, and Q256. K257 is modified (N6-(pyridoxal phosphate)lysine). A pyridoxal 5'-phosphate-binding site is contributed by 298–299 (NT).

The protein belongs to the class-V pyridoxal-phosphate-dependent aminotransferase family. SerC subfamily. The cofactor is pyridoxal 5'-phosphate.

The protein localises to the plastid. Its subcellular location is the chloroplast. The enzyme catalyses O-phospho-L-serine + 2-oxoglutarate = 3-phosphooxypyruvate + L-glutamate. The catalysed reaction is 4-(phosphooxy)-L-threonine + 2-oxoglutarate = (R)-3-hydroxy-2-oxo-4-phosphooxybutanoate + L-glutamate. It functions in the pathway amino-acid biosynthesis; L-serine biosynthesis; L-serine from 3-phospho-D-glycerate: step 2/3. Its function is as follows. Involved in the plastidial phosphorylated pathway of serine biosynthesis (PPSB). Catalyzes the reversible conversion of 3-phosphohydroxypyruvate to phosphoserine. This chain is Phosphoserine aminotransferase 2, chloroplastic (PSAT2), found in Arabidopsis thaliana (Mouse-ear cress).